Here is a 466-residue protein sequence, read N- to C-terminus: Glutamate decarboxylase (466 aa).

Lysine 277 is modified (N6-(pyridoxal phosphate)lysine).

It belongs to the group II decarboxylase family. Requires pyridoxal 5'-phosphate as cofactor.

It carries out the reaction L-glutamate + H(+) = 4-aminobutanoate + CO2. Functionally, converts internalized glutamate to GABA and increases the internal pH. Involved in glutamate-dependent acid resistance. In Lactococcus lactis subsp. lactis (strain IL1403) (Streptococcus lactis), this protein is Glutamate decarboxylase (gadB).